Consider the following 439-residue polypeptide: Signal recognition particle 54 kDa protein (439 aa).

GTP contacts are provided by residues 104 to 111 (GLQGSGKT), 184 to 188 (DTAGR), and 242 to 245 (SKLD).

It belongs to the GTP-binding SRP family. SRP54 subfamily. In terms of assembly, part of the signal recognition particle protein translocation system, which is composed of SRP and FtsY. Archaeal SRP consists of a 7S RNA molecule of 300 nucleotides and two protein subunits: SRP54 and SRP19.

It localises to the cytoplasm. It catalyses the reaction GTP + H2O = GDP + phosphate + H(+). Functionally, involved in targeting and insertion of nascent membrane proteins into the cytoplasmic membrane. Binds to the hydrophobic signal sequence of the ribosome-nascent chain (RNC) as it emerges from the ribosomes. The SRP-RNC complex is then targeted to the cytoplasmic membrane where it interacts with the SRP receptor FtsY. In Methanococcoides burtonii (strain DSM 6242 / NBRC 107633 / OCM 468 / ACE-M), this protein is Signal recognition particle 54 kDa protein.